Consider the following 87-residue polypeptide: Type 3 secretion system needle filament protein (87 aa).

The protein belongs to the SctF family. In terms of assembly, the core secretion machinery of the T3SS is composed of approximately 20 different proteins, including cytoplasmic components, a base, an export apparatus and a needle. This subunit polymerizes and forms the helical needle filament. In Y.enterocolitica E40, the needles are composed of 139 (plus-minus 19) YscF/SctF subunits.

Its subcellular location is the secreted. It localises to the cell surface. The secretion and/or polymerization may be controlled by the type III secretion system regulator YopR. In terms of biological role, component of the type III secretion system (T3SS), also called injectisome, which is used to inject bacterial effector proteins into eukaryotic host cells. YscF/SctF forms the external needle filament that protrudes from the bacterial surface. The needle is not sufficient by itself for the formation of a pore allowing translocation of the Yop effectors across the host cell membrane. The chain is Type 3 secretion system needle filament protein from Yersinia enterocolitica.